Here is a 291-residue protein sequence, read N- to C-terminus: Acetyl-coenzyme A carboxylase carboxyl transferase subunit beta (291 aa).

The CoA carboxyltransferase N-terminal domain occupies M36–N291. Residues C40, C43, C59, and C62 each contribute to the Zn(2+) site. The C4-type zinc finger occupies C40–C62.

This sequence belongs to the AccD/PCCB family. Acetyl-CoA carboxylase is a heterohexamer composed of biotin carboxyl carrier protein (AccB), biotin carboxylase (AccC) and two subunits each of ACCase subunit alpha (AccA) and ACCase subunit beta (AccD). The cofactor is Zn(2+).

The protein localises to the cytoplasm. The catalysed reaction is N(6)-carboxybiotinyl-L-lysyl-[protein] + acetyl-CoA = N(6)-biotinyl-L-lysyl-[protein] + malonyl-CoA. Its pathway is lipid metabolism; malonyl-CoA biosynthesis; malonyl-CoA from acetyl-CoA: step 1/1. Its function is as follows. Component of the acetyl coenzyme A carboxylase (ACC) complex. Biotin carboxylase (BC) catalyzes the carboxylation of biotin on its carrier protein (BCCP) and then the CO(2) group is transferred by the transcarboxylase to acetyl-CoA to form malonyl-CoA. The chain is Acetyl-coenzyme A carboxylase carboxyl transferase subunit beta from Clostridium kluyveri (strain NBRC 12016).